Consider the following 146-residue polypeptide: Large ribosomal subunit protein uL15 (146 aa).

The segment at 1–58 is disordered; sequence MNLSELRPAPGARKKPTRKGQGIGSGLGKTAGKGHKGQNARSGGGVRPGFEGGQMPLQ. 2 stretches are compositionally biased toward gly residues: residues 21-31 and 42-52; these read QGIGSGLGKTA and SGGGVRPGFEG.

Belongs to the universal ribosomal protein uL15 family. As to quaternary structure, part of the 50S ribosomal subunit.

Binds to the 23S rRNA. This is Large ribosomal subunit protein uL15 from Desulforamulus reducens (strain ATCC BAA-1160 / DSM 100696 / MI-1) (Desulfotomaculum reducens).